The sequence spans 485 residues: MELEVRRVRQAFLSGRSRPLRFRLQQLEALRRMVQEREKDILAAIAADLCKSEFNVYSQEVITVLGEIDFMLENLPEWVTAKPVKKNVLTMLDEAYIQPQPLGVVLIIGAWNYPFVLTIQPLIGAIAAGNAVIIKPSELSENTAKMLAKLLPQYLDQDLYIVINGGVEETTELLKQRFDHIFYTGNTAVGKIVMEAAAKHLTPVTLELGGKSPCYIDKDCDLDIVCRRITWGKYMNCGQTCIAPDYILCEASLQNQIVWKIKETVKEFYGENIKESPDYERIINLRHFKRILSLLEGQKIAFGGETDEATRYIAPTVLTDVDPKTKVMQEEIFGPILPIVPVKNVDEAINFINEREKPLALYVFSHNHKLIKRMIDETSSGGVTGNDVIMHFMLNSFPFGGVGSSGMGAYHGKHSFDTFSHQRPCLLKSLKREGANKLRYPPNSQSKVDWGKFFLLKRFNKEKLGLLLLTFLGIVAAVLVKAEYY.

Over 1–463 the chain is Cytoplasmic; that stretch reads MELEVRRVRQ…FLLKRFNKEK (463 aa). 185-190 provides a ligand contact to NAD(+); that stretch reads GNTAVG. Residues E207 and C241 contribute to the active site. The residue at position 293 (S293) is a Phosphoserine. A helical membrane pass occupies residues 464–484; that stretch reads LGLLLLTFLGIVAAVLVKAEY. Residues 481–484 carry the Prevents secretion from ER motif; that stretch reads KAEY.

Belongs to the aldehyde dehydrogenase family. Homodimer.

The protein localises to the microsome membrane. It is found in the endoplasmic reticulum membrane. The catalysed reaction is an aldehyde + NAD(+) + H2O = a carboxylate + NADH + 2 H(+). The enzyme catalyses a fatty aldehyde + NAD(+) + H2O = a fatty acid + NADH + 2 H(+). It catalyses the reaction (2E)-hexadecenal + NAD(+) + H2O = (E)-hexadec-2-enoate + NADH + 2 H(+). It carries out the reaction hexadecanoate + NADH + 2 H(+) = hexadecanal + NAD(+) + H2O. The catalysed reaction is 22-oxodocosanoate + NAD(+) + H2O = docosanedioate + NADH + 2 H(+). The enzyme catalyses 2,6,10,14-tetramethylpentadecanal + NAD(+) + H2O = 2,6,10,14-tetramethylpentadecanoate + NADH + 2 H(+). It catalyses the reaction octadecanal + NAD(+) + H2O = octadecanoate + NADH + 2 H(+). It carries out the reaction dodecanoate + NADH + 2 H(+) = dodecanal + NAD(+) + H2O. The catalysed reaction is decanal + NAD(+) + H2O = decanoate + NADH + 2 H(+). The enzyme catalyses tetradecanal + NAD(+) + H2O = tetradecanoate + NADH + 2 H(+). It catalyses the reaction octanal + NAD(+) + H2O = octanoate + NADH + 2 H(+). It carries out the reaction heptanal + NAD(+) + H2O = heptanoate + NADH + 2 H(+). The catalysed reaction is (2E,6E)-farnesal + NAD(+) + H2O = (2E,6E)-farnesoate + NADH + 2 H(+). Catalyzes the oxidation of medium and long-chain aliphatic aldehydes to fatty acids. Active on a variety of saturated and unsaturated aliphatic aldehydes between 6 and 24 carbons in length. Responsible for conversion of the sphingosine 1-phosphate (S1P) degradation product hexadecenal to hexadecenoic acid. This Pongo abelii (Sumatran orangutan) protein is Aldehyde dehydrogenase family 3 member A2 (ALDH3A2).